Here is a 538-residue protein sequence, read N- to C-terminus: Poly [ADP-ribose] polymerase 2 (538 aa).

The WGR domain occupies M1 to Y94. The interval R104–G133 is disordered. The segment covering Q105–T126 has biased composition (basic and acidic residues). The PARP alpha-helical domain maps to V148–K285. Residues E309–E535 form the PARP catalytic domain. The disordered stretch occupies residues Q357–K381.

Belongs to the ARTD/PARP family.

The protein resides in the nucleus. It carries out the reaction NAD(+) + (ADP-D-ribosyl)n-acceptor = nicotinamide + (ADP-D-ribosyl)n+1-acceptor + H(+).. It catalyses the reaction L-aspartyl-[protein] + NAD(+) = 4-O-(ADP-D-ribosyl)-L-aspartyl-[protein] + nicotinamide. The catalysed reaction is L-glutamyl-[protein] + NAD(+) = 5-O-(ADP-D-ribosyl)-L-glutamyl-[protein] + nicotinamide. Inhibited by N-(6-oxo-5,6-dihydrophenanthridin-2-yl)-N,N-dimethylacetamide HCl (PJ34), 1,5-dihydroxyisoquinoline (DHQ) and 3-aminobenzamide (3AB). In terms of biological role, poly[ADP-ribose] polymerase modifies various nuclear proteins by poly(ADP-ribosyl)ation, a post-translational modification synthesized after DNA damage that appears as an obligatory step in a detection/signaling pathway leading to the reparation of DNA strand breaks and programmed cell death. The polypeptide is Poly [ADP-ribose] polymerase 2 (Caenorhabditis elegans).